The chain runs to 254 residues: Ornithine decarboxylase antizyme (254 aa).

Belongs to the ODC antizyme family. In terms of assembly, interacts with ODC1 and thereby sterically blocks ODC homodimerization.

Its function is as follows. Ornithine decarboxylase (ODC) antizyme protein that negatively regulates ODC activity and intracellular polyamine biosynthesis and uptake in response to increased intracellular polyamine levels. Binds to ODC monomers, inhibiting the assembly of the functional ODC homodimer, and targets the monomers for ubiquitin-independent proteolytic destruction by the 26S proteasome. Required for cellular differentiation in neuronal and myogenic lineages during embryonic development. This Drosophila melanogaster (Fruit fly) protein is Ornithine decarboxylase antizyme (Oda).